A 337-amino-acid polypeptide reads, in one-letter code: F420-dependent glucose-6-phosphate dehydrogenase (337 aa).

D40 lines the coenzyme F420-(gamma-Glu)n pocket. The active-site Proton donor is the H41. Coenzyme F420-(gamma-Glu)n-binding positions include T77 and 108–109 (TG). The Proton acceptor role is filled by E110. Coenzyme F420-(gamma-Glu)n contacts are provided by residues N113, 178–179 (GG), and 181–182 (VV). T196, K199, K260, and R284 together coordinate substrate.

Belongs to the F420-dependent glucose-6-phosphate dehydrogenase family. Homodimer.

The catalysed reaction is oxidized coenzyme F420-(gamma-L-Glu)(n) + D-glucose 6-phosphate + H(+) = 6-phospho-D-glucono-1,5-lactone + reduced coenzyme F420-(gamma-L-Glu)(n). In terms of biological role, catalyzes the coenzyme F420-dependent oxidation of glucose 6-phosphate (G6P) to 6-phosphogluconolactone. This chain is F420-dependent glucose-6-phosphate dehydrogenase, found in Rhodococcus hoagii (strain 103S) (Rhodococcus equi).